Reading from the N-terminus, the 173-residue chain is Thiol-disulfide oxidoreductase ResA (173 aa).

The helical; Signal-anchor for type II membrane protein transmembrane segment at 10–29 threads the bilayer; it reads VIILLILCGAVGFTLYQGFF. One can recognise a Thioredoxin domain in the interval 35–173; the sequence is MQIGKEAPNF…LEGYLQKITP (139 aa). Cysteine 73 and cysteine 76 are joined by a disulfide.

This sequence belongs to the thioredoxin family. ResA subfamily.

Its subcellular location is the cell membrane. The protein operates within protein modification; cytochrome c assembly. Thiol-disulfide oxidoreductase which is required in disulfide reduction during c-type cytochrome synthesis. May accept reducing equivalents from CcdA, leading to breakage of disulfide bonds in apocytochrome c; following this reduction heme can be covalently attached. This chain is Thiol-disulfide oxidoreductase ResA, found in Bacillus cereus (strain ZK / E33L).